Consider the following 637-residue polypeptide: MASAEMRERLEAPLPDRAVPIYVAGFLALYDSGDPGELALDPDTVRAALPPENPLPINVDHRARCEVGRVLAVVNDPRGPFFVGLIACVQLERVLETAASAAIFERRGPALSREERLLYLITNYLPSVSLSTKRRGDEVPPDRTLFAHVALCAIGRRLGTIVTYDTSLDAAIAPFRHLDPATREGVRREAAEAELALAGRTWAPGVEALTHTLLSTAVNNMMLRDRWSLVAERRRQAGIAGHTYLQASEKFKIWGAESAPAPERGYKTGAPGAMDTSPAASVPAPQVAVRARQVASSSSSSSFPAPADMNPVSASGAPAPPPPGDGSYLWIPASHYNQLVTGQSAPRHPPLTACGLPAAGTVAYGHPGAGPSPHYPPPPAHPYPGMLFAGPSPLEAQIAALVGAIAADRQAGGLPAAAGDHGIRGSAKRRRHEVEQPEYDCGRDEPDRDFPYYPGEARPEPRPVDSRRAARQASGPHETITALVGAVTSLQQELAHMRARTHAPYGPYPPVGPYHHPHADTETPAQPPRYPAKAVYLPPPHIAPPGPPLSGAVPPPSYPPVAVTPGPAPPLHQPSPAHAHPPPPPPGPTPPPAASLPQPEAPGAEAGALVNASSAAHVNVDTARAADLFVSQMMGSR.

Catalysis depends on charge relay system residues histidine 61, serine 129, and histidine 148. Disordered stretches follow at residues 262–326 (PERG…PGDG), 414–479 (LPAA…PHET), and 502–608 (HAPY…EAGA). Positions 277–317 (SPAASVPAPQVAVRARQVASSSSSSSFPAPADMNPVSASGA) are enriched in low complexity. Positions 326-345 (GSYLWIPASHYNQLVTGQSA) are interaction with pAP. Residues 428 to 431 (KRRR) carry the Nuclear localization signal motif. Composition is skewed to basic and acidic residues over residues 432–450 (HEVE…DRDF) and 457–468 (ARPEPRPVDSRR). 2 stretches are compositionally biased toward pro residues: residues 537–559 (LPPP…PSYP) and 566–594 (GPAP…PPAA). The span at 595-608 (SLPQPEAPGAEAGA) shows a compositional bias: low complexity. Residues 617–637 (HVNVDTARAADLFVSQMMGSR) are interaction with major capsid protein.

It belongs to the herpesviridae capsid scaffolding protein family. Homomultimer. Interacts with major capsid protein. In terms of assembly, exists in a monomer-dimer equilibrium with the dimer being the active species. Post-translationally, capsid scaffolding protein is cleaved by assemblin after formation of the spherical procapsid. As a result, the capsid obtains its mature, icosahedral shape. Cleavages occur at two or more sites: release (R-site) and maturation (M-site).

The protein resides in the host cytoplasm. Its subcellular location is the host nucleus. The enzyme catalyses Cleaves -Ala-|-Ser- and -Ala-|-Ala- bonds in the scaffold protein.. In terms of biological role, acts as a scaffold protein by binding major capsid protein in the cytoplasm, inducing the nuclear localization of both proteins. Multimerizes in the nucleus such as major capsid protein forms the icosahedral T=16 capsid. Autocatalytic cleavage releases the assembly protein, and subsequently abolishes interaction with major capsid protein. Cleavages products are evicted from the capsid before or during DNA packaging. Protease that plays an essential role in virion assembly within the nucleus. Catalyzes the cleavage of the assembly protein after formation of the spherical procapsid. By that cleavage, the capsid matures and gains its icosahedral shape. The cleavage sites seem to include -Ala-Ser-, -Ala-Ala-, as well as Ala-Thr bonds. Assemblin and cleavages products are evicted from the capsid before or during DNA packaging. Its function is as follows. Plays a major role in capsid assembly. Acts as a scaffold protein by binding major capsid protein. Multimerizes in the nucleus such as major capsid protein forms the icosahedral T=16 capsid. Cleaved by assemblin after capsid completion. The cleavages products are evicted from the capsid before or during DNA packaging. This chain is Capsid scaffolding protein (UL26), found in Homo sapiens (Human).